Consider the following 343-residue polypeptide: DNA-directed RNA polymerase subunit alpha (343 aa).

Positions 1–239 (MGETVTIQKN…DQLNVFVNFE (239 aa)) are alpha N-terminal domain (alpha-NTD). An alpha C-terminal domain (alpha-CTD) region spans residues 255-343 (FNPAFLKKVD…ELAKRFEDHY (89 aa)).

The protein belongs to the RNA polymerase alpha chain family. As to quaternary structure, homodimer. The RNAP catalytic core consists of 2 alpha, 1 beta, 1 beta' and 1 omega subunit. When a sigma factor is associated with the core the holoenzyme is formed, which can initiate transcription.

It carries out the reaction RNA(n) + a ribonucleoside 5'-triphosphate = RNA(n+1) + diphosphate. In terms of biological role, DNA-dependent RNA polymerase catalyzes the transcription of DNA into RNA using the four ribonucleoside triphosphates as substrates. The chain is DNA-directed RNA polymerase subunit alpha from Bradyrhizobium sp. (strain BTAi1 / ATCC BAA-1182).